A 389-amino-acid polypeptide reads, in one-letter code: Chalcone synthase (389 aa).

Cysteine 164 is a catalytic residue.

This sequence belongs to the thiolase-like superfamily. Chalcone/stilbene synthases family.

It catalyses the reaction (E)-4-coumaroyl-CoA + 3 malonyl-CoA + 3 H(+) = 2',4,4',6'-tetrahydroxychalcone + 3 CO2 + 4 CoA. The protein operates within secondary metabolite biosynthesis; flavonoid biosynthesis. The primary product of this enzyme is 4,2',4',6'-tetrahydroxychalcone (also termed naringenin-chalcone or chalcone) which can under specific conditions spontaneously isomerize into naringenin. The protein is Chalcone synthase (CHS1) of Casuarina glauca (Swamp oak).